Here is a 103-residue protein sequence, read N- to C-terminus: Small ribosomal subunit protein uS10 (103 aa).

The protein belongs to the universal ribosomal protein uS10 family. Part of the 30S ribosomal subunit.

Its function is as follows. Involved in the binding of tRNA to the ribosomes. This Pectobacterium atrosepticum (strain SCRI 1043 / ATCC BAA-672) (Erwinia carotovora subsp. atroseptica) protein is Small ribosomal subunit protein uS10.